Consider the following 188-residue polypeptide: FMN reductase (NADH) RutF (188 aa).

It belongs to the non-flavoprotein flavin reductase family. RutF subfamily.

The enzyme catalyses FMNH2 + NAD(+) = FMN + NADH + 2 H(+). In terms of biological role, catalyzes the reduction of FMN to FMNH2 which is used to reduce pyrimidine by RutA via the Rut pathway. This chain is FMN reductase (NADH) RutF, found in Acinetobacter baylyi (strain ATCC 33305 / BD413 / ADP1).